The primary structure comprises 165 residues: Cyclic pyranopterin monophosphate synthase (165 aa).

Substrate is bound by residues 75 to 77 (MCH) and 115 to 116 (ME). Asp130 is an active-site residue.

This sequence belongs to the MoaC family. As to quaternary structure, homohexamer; trimer of dimers.

It catalyses the reaction (8S)-3',8-cyclo-7,8-dihydroguanosine 5'-triphosphate = cyclic pyranopterin phosphate + diphosphate. It participates in cofactor biosynthesis; molybdopterin biosynthesis. Its function is as follows. Catalyzes the conversion of (8S)-3',8-cyclo-7,8-dihydroguanosine 5'-triphosphate to cyclic pyranopterin monophosphate (cPMP). The polypeptide is Cyclic pyranopterin monophosphate synthase (Halalkalibacterium halodurans (strain ATCC BAA-125 / DSM 18197 / FERM 7344 / JCM 9153 / C-125) (Bacillus halodurans)).